A 376-amino-acid chain; its full sequence is Arsenite methyltransferase (376 aa).

Phosphoserine occurs at positions 47 and 336. A compositionally biased stretch (basic and acidic residues) spans 354-363 (SDKMKPRHAP). Positions 354–376 (SDKMKPRHAPEGTGGCCGKRKNC) are disordered.

This sequence belongs to the methyltransferase superfamily. Arsenite methyltransferase family.

It is found in the cytoplasm. The protein resides in the cytosol. It catalyses the reaction arsenic triglutathione + [thioredoxin]-dithiol + S-adenosyl-L-methionine + 2 H2O = methylarsonous acid + [thioredoxin]-disulfide + 3 glutathione + S-adenosyl-L-homocysteine + H(+). It carries out the reaction arsenic triglutathione + 2 [thioredoxin]-dithiol + 2 S-adenosyl-L-methionine + H2O = dimethylarsinous acid + 2 [thioredoxin]-disulfide + 3 glutathione + 2 S-adenosyl-L-homocysteine + 2 H(+). The enzyme catalyses arsenic triglutathione + 3 [thioredoxin]-dithiol + 3 S-adenosyl-L-methionine = trimethylarsine + 3 [thioredoxin]-disulfide + 3 glutathione + 3 S-adenosyl-L-homocysteine + 3 H(+). Catalyzes the transfer of a methyl group from AdoMet to trivalent arsenicals producing methylated and dimethylated arsenicals. It methylates arsenite to form methylarsonate, Me-AsO(3)H(2), which is reduced by methylarsonate reductase to methylarsonite, Me-As(OH)2. Methylarsonite is also a substrate and it is converted into the much less toxic compound dimethylarsinate (cacodylate), Me(2)As(O)-OH. The protein is Arsenite methyltransferase (As3mt) of Mus musculus (Mouse).